Here is a 559-residue protein sequence, read N- to C-terminus: DnaJ homolog subfamily C member 11 (559 aa).

A2 carries the post-translational modification N-acetylalanine. The J domain maps to 14-82 (DYYSLLNVRR…QTRAIYDIYG (69 aa)). S204 carries the post-translational modification Phosphoserine. Positions 415–457 (QKEKELEKQRENTASDILQKKQEAEAAVRLMQESVRRIIEAEE) form a coiled coil.

This sequence belongs to the DNAJC11 family. In terms of assembly, associates with the mitochondrial contact site and cristae organizing system (MICOS) complex, composed of at least MICOS10/MIC10, CHCHD3/MIC19, CHCHD6/MIC25, APOOL/MIC27, IMMT/MIC60, APOO/MIC23/MIC26 and QIL1/MIC13. This complex was also known under the names MINOS or MitOS complex. The MICOS complex associates with mitochondrial outer membrane proteins SAMM50, MTX1 and MTX2 (together described as components of the mitochondrial outer membrane sorting assembly machinery (SAM) complex) and DNAJC11, mitochondrial inner membrane protein TMEM11 and with HSPA9. The MICOS and SAM complexes together with DNAJC11 are part of a large protein complex spanning both membranes termed the mitochondrial intermembrane space bridging (MIB) complex.

The protein localises to the mitochondrion. Its subcellular location is the mitochondrion outer membrane. In terms of biological role, required for mitochondrial inner membrane organization. Seems to function through its association with the MICOS complex and the mitochondrial outer membrane sorting assembly machinery (SAM) complex. This Mus musculus (Mouse) protein is DnaJ homolog subfamily C member 11 (Dnajc11).